A 177-amino-acid chain; its full sequence is MNSRIHVIHGDITTVAVDAIVNAANPSLMGGGGVDGAIHRAAGPELLEACMTVRRQQGECPPGHAVITAAGRLPAKAVIHTVGPIWRGGEHNEAQLLHDAYLNSLNLALANGYQSIAFPAISTGVYGYPRAAAAEIAVNTISEFITRRASPEQIYFVCYDEETTRLYQRLLTQQGDQ.

The 175-residue stretch at 1 to 175 folds into the Macro domain; that stretch reads MNSRIHVIHG…LYQRLLTQQG (175 aa). Substrate-binding positions include 11 to 12, asparagine 25, 33 to 35, and 122 to 126; these read DI, GVD, and STGVY. Aspartate 35 acts as the Proton acceptor in catalysis.

Belongs to the MacroD-type family. YmdB subfamily. In terms of assembly, homodimer. Interacts with RNase III.

The catalysed reaction is 3''-O-acetyl-ADP-D-ribose + H2O = ADP-D-ribose + acetate + H(+). It carries out the reaction 2''-O-acetyl-ADP-D-ribose + H2O = ADP-D-ribose + acetate + H(+). Deacetylates O-acetyl-ADP ribose to yield ADP-ribose and free acetate. Down-regulates ribonuclease 3 (RNase III) activity. Acts by interacting directly with the region of the ribonuclease that is required for dimerization/activation. The protein is O-acetyl-ADP-ribose deacetylase of Citrobacter rodentium (strain ICC168) (Citrobacter freundii biotype 4280).